Consider the following 309-residue polypeptide: Ribosomal RNA small subunit methyltransferase H (309 aa).

S-adenosyl-L-methionine is bound by residues Gly34–His36, Asp54, Phe80, Asp102, and Gln109.

This sequence belongs to the methyltransferase superfamily. RsmH family.

It is found in the cytoplasm. The catalysed reaction is cytidine(1402) in 16S rRNA + S-adenosyl-L-methionine = N(4)-methylcytidine(1402) in 16S rRNA + S-adenosyl-L-homocysteine + H(+). Functionally, specifically methylates the N4 position of cytidine in position 1402 (C1402) of 16S rRNA. The sequence is that of Ribosomal RNA small subunit methyltransferase H from Cellvibrio japonicus (strain Ueda107) (Pseudomonas fluorescens subsp. cellulosa).